Consider the following 108-residue polypeptide: UPF0145 protein LCABL_07110 (108 aa).

The protein belongs to the UPF0145 family.

The protein is UPF0145 protein LCABL_07110 of Lacticaseibacillus casei (strain BL23) (Lactobacillus casei).